Reading from the N-terminus, the 242-residue chain is Coiled-coil domain-containing protein 107 (242 aa).

The N-terminal stretch at 1–24 (MEGAGPVLSILGLLLVSAPFGVLG) is a signal peptide. The tract at residues 27 to 62 (PSADLGAHPERGSQVSPGTTEPRRQPPPKDQRERAR) is disordered. Residues 47–62 (EPRRQPPPKDQRERAR) show a composition bias toward basic and acidic residues. Residues 65-85 (SLSLGALYTAAVVAFVLFKCL) traverse the membrane as a helical segment. Positions 97–132 (EKNKKKSSQSEQQLVQLTQQLAQTEQHLNHLMTQLD) form a coiled coil. The segment at 186–210 (KEDQEAGNSQAWEEPITWSPETRNL) is disordered.

The protein resides in the membrane. This is Coiled-coil domain-containing protein 107 (Ccdc107) from Mus musculus (Mouse).